The primary structure comprises 54 residues: Snake venom 5'-nucleotidase (54 aa).

The Zn(2+) site is built by Asp-11 and His-13. Asn-46 carries N-linked (GlcNAc...) asparagine glycosylation.

The protein belongs to the 5'-nucleotidase family. Requires Zn(2+) as cofactor. In terms of processing, venom 5'-nucleotidases (or a part thereof) may be released into the venom via exosome-like vesicles. They may be attached via a GPI anchor to the membrane of these vesicles. Soluble forms of 5'-nucleotidase might be released by cleavage of the ectodomain in the exosome-like vesicles or venom gland cells. Expressed by the venom gland.

The protein localises to the membrane. It catalyses the reaction a ribonucleoside 5'-phosphate + H2O = a ribonucleoside + phosphate. Functionally, hydrolyzes nucleotides into nucleosides. Snake venom 5'-nucleotidases are widely distributed among venomous snake taxa, but there is a lack of information about their biological activities. They have been shown to inhibit platelet aggregation. This effect may be due to the liberation of inhibitory AMP or adenosine by its action on ADP released upon initiation of aggregation. Venom 5'-nucleotidases are also known to synergistically act in vivo with other toxins like ADPases, phospholipases, and disintegrins to exert a more pronounced anti-coagulant effect. This is Snake venom 5'-nucleotidase from Gloydius blomhoffii blomhoffii (Japanese mamushi).